The sequence spans 467 residues: Neurexin-1-beta (467 aa).

The signal sequence occupies residues 1-45; it reads MYQRMLRCGAELGSPGGGGGGAGGRLALLWIVPLTLSGLLGVAWG. Residues 46–391 lie on the Extracellular side of the membrane; that stretch reads ASSLGAHHIH…EVIRESSSTT (346 aa). The Laminin G-like domain maps to 86–284; it reads YIFSKGGGQI…DANIAIVGNV (199 aa). 2 residues coordinate Ca(2+): Asp136 and Val153. N-linked (GlcNAc...) asparagine glycosylation is present at Asn183. The essential for interaction with CBLN1; modulates interaction affinity with NLGN1, NLGN2 and NLGN3; prevents interaction with DAG1/alpha-dystroglycan; modulates interaction with alpha-latrotoxin stretch occupies residues 200–229; that stretch reads GNNDNERLAIARQRIPYRLGRVVDEWLLDK. 2 residues coordinate Ca(2+): Ile235 and Asn237. Residues 318–380 form a disordered region; it reads LATSTARRGN…AGGREPYPGS (63 aa). Residues 324-339 show a composition bias toward polar residues; that stretch reads RRGNSPTKEPVSQTTD. Ser345 carries O-linked (Xyl...) (heparan sulfate) serine glycosylation. A helical membrane pass occupies residues 392 to 412; that stretch reads GMVVGIVAAAALCILILLYAM. The Cytoplasmic segment spans residues 413 to 467; that stretch reads YKYRNRDEGSYHVDESRNYISNSAQSNGAVVKEKQPSSAKSANKNKKNKDKEYYV. A disordered region spans residues 434–467; that stretch reads NSAQSNGAVVKEKQPSSAKSANKNKKNKDKEYYV. Ser449, Ser450, and Ser453 each carry phosphoserine.

It belongs to the neurexin family. As to quaternary structure, the cytoplasmic C-terminal region binds to CASK. Binds NLGN1, NLGN2 and NLGN3, DAG1 (alpha-dystroglycan) and alpha-latrotoxin. Binding to neuroligins is calcium-dependent, and the binding preference ranks as follow: NLGN1 &gt; NLGN4 &gt;&gt; NLGN3 &gt; NLGN2. Interacts with CBLN2 and more weakly with CBLN4. Interacts with CBLN1; interaction is CBLN1 hexamer form-dependent; CBLN1-binding is calcium-independent; isoform 1b does not interact with CBLN1. Interacts with CLSTN3. Post-translationally, O-glycosylated; contains heparan sulfate. Heparan sulfate attachment is required for synapse development by mediating interactions with neuroligins.

Its subcellular location is the presynaptic cell membrane. Functionally, neuronal cell surface protein involved in cell recognition and cell adhesion by forming intracellular junctions through binding to neuroligins. Plays a role in formation of synaptic junctions. Functions as part of a trans-synaptic complex by binding to cerebellins and postsynaptic GRID1. This interaction helps regulate the activity of NMDA and AMPA receptors at hippocampal synapses without affecting synapse formation. NRXN1B-CBLN2-GRID1 complex transduce presynaptic signals into postsynaptic NMDAR response. The chain is Neurexin-1-beta from Bos taurus (Bovine).